A 350-amino-acid polypeptide reads, in one-letter code: MFS transporter OpS2 (350 aa).

The next 8 membrane-spanning stretches (helical) occupy residues 3 to 23, 34 to 54, 65 to 85, 141 to 161, 174 to 194, 227 to 247, 253 to 273, and 312 to 332; these read FLAGGASASVAAVGAGTVADL, GYFFLGPMLGPLVSPIIGGIL, WGAVVYGGLVWLSMIFLLPET, FMTCYYASISFACYYILNLAI, AIILGLLYIPSALGSIVASVV, MCENAWIPAFVFPAALLVFGW, IFWFAPIVVTFFFGLGNSLIF, and PLLGAIGTQWLFTGLAVICWA.

This sequence belongs to the major facilitator superfamily.

The protein resides in the cell membrane. In terms of biological role, MFS transporter; part of the gene cluster that mediates the biosynthesis of the bibenzoquinone oosporein, a metabolite required for fungal virulence that acts by evading host immunity to facilitate fungal multiplication in insects. The function of this putative MFS transporter remains unclear since its deletion leads to increased oosporein production. This is MFS transporter OpS2 from Beauveria bassiana (strain ARSEF 2860) (White muscardine disease fungus).